The chain runs to 249 residues: Protein TIFY 10B (249 aa).

The Tify domain occupies P113 to K148. The short motif at P204–Q229 is the Jas element. A Nuclear localization signal motif is present at residues A206–R213. Positions K225 to R249 are disordered. Positions E235–R249 are enriched in polar residues.

Belongs to the TIFY/JAZ family. In terms of assembly, homo- and heterodimer. Interacts with COI1, MYC2, MYC3, MYC4, AFPH2/NINJA, TIFY10A/JAZ1, TIFY6B/JAZ3, TIFY11A/JAZ5, TIFY11B/JAZ6, TIFY5A/JAZ8, TIFY7/JAZ9, TIFY9/JAZ10, TIFY3A/JAZ11 and TIFY3B/JAZ12. Interacts with RHD6 and RSL1. As to quaternary structure, (Microbial infection) Interacts with the pathogenic Pseudomonas syringae HopZ1a protein. Post-translationally, (Microbial infection) Acetylated by Pseudomonas syringae HopZ1a. In terms of processing, ubiquitinated. Targeted for degradation by the SCF(COI1) E3 ubiquitin ligase-proteasome pathway during jasmonate signaling. As to expression, expressed in cotyledons, hypocotyls, roots, sepals, petal vascular tissue and stigmas of developing flowers. Expressed in stamen filaments after jasmonic acid treatment.

It is found in the nucleus. Repressor of jasmonate responses. Jasmonoyl-isoleucine (JA-Ile) specifically promotes COI1-TIFY10B/JAZ2 interaction. Activated by MYC2, MYC3 and MYC4 transcription factors. Interacts with and suppresses RHD6 and RSL1 transcription factor activities to negatively regulate jasmonate-stimulated root hair development. The chain is Protein TIFY 10B from Arabidopsis thaliana (Mouse-ear cress).